A 363-amino-acid polypeptide reads, in one-letter code: Osmoprotective compounds uptake ATP-binding protein GgtA (363 aa).

The ABC transporter domain occupies 4–234 (VSFEQVTKQF…PANLFVAGFI (231 aa)). An ATP-binding site is contributed by 36 to 43 (GPSGCGKT).

Belongs to the ABC transporter superfamily. In terms of assembly, the complex is composed of two ATP-binding proteins (GgtA), two transmembrane proteins (GgtC and GgtD) and a solute-binding protein (GgtB).

The protein resides in the cell membrane. Its function is as follows. Part of the ABC transporter complex GgtABCD involved in the uptake of the osmoprotective compounds glucosylglycerol (GG), sucrose and trehalose. Responsible for energy coupling to the transport system. This chain is Osmoprotective compounds uptake ATP-binding protein GgtA, found in Synechocystis sp. (strain ATCC 27184 / PCC 6803 / Kazusa).